A 202-amino-acid polypeptide reads, in one-letter code: 3-isopropylmalate dehydratase small subunit (202 aa).

It belongs to the LeuD family. LeuD type 1 subfamily. As to quaternary structure, heterodimer of LeuC and LeuD.

The catalysed reaction is (2R,3S)-3-isopropylmalate = (2S)-2-isopropylmalate. Its pathway is amino-acid biosynthesis; L-leucine biosynthesis; L-leucine from 3-methyl-2-oxobutanoate: step 2/4. In terms of biological role, catalyzes the isomerization between 2-isopropylmalate and 3-isopropylmalate, via the formation of 2-isopropylmaleate. This Buchnera aphidicola subsp. Pemphigus spyrothecae protein is 3-isopropylmalate dehydratase small subunit.